The chain runs to 353 residues: MFGSVRLVQEVTRSNQQTAANTTSPASVDESIIAQEPSNVSDLTSEPVESTQIKQQGNTEASQDIQQEQQQQQTHIHPQQPALSAQQTQQQPALPCWSTPTQHIPISFSAITSPSVLSSYKSRDFRNLFTTTNSSPNPSSPSPSSMKSHTRKNSKYTVRHHRTRQSSFNGTTNPPAYFSSNSILRKQPPTHHPQRNFLQLQQEQQKSKSQKLLCLWPLPTVTRYMILIALFVSTLNCLHILDLSCSAPSFVVYRFDIKNMILSPFLFNWTLPSMALFGWNVLILGLFEESLAHMVGGTRRFIQLLLVLFTTVSLVRVCLGLIFSKATGYAFPSLFFSNTMHECSQGLCVCCIF.

Composition is skewed to polar residues over residues 11 to 26 (VTRS…TSPA) and 36 to 58 (EPSN…QQGN). Disordered regions lie at residues 11–96 (VTRS…ALPC) and 129–174 (FTTT…TTNP). 2 stretches are compositionally biased toward low complexity: residues 59-95 (TEAS…PALP) and 133-145 (NSSP…SPSS). The span at 148-164 (SHTRKNSKYTVRHHRTR) shows a compositional bias: basic residues. Positions 165 to 174 (QSSFNGTTNP) are enriched in polar residues.

The protein resides in the nucleus. Functionally, may be involved in transcriptional activation. The sequence is that of Putative transcription factor MTF1 (MTF1) from Mucor circinelloides f. lusitanicus (Mucor racemosus var. lusitanicus).